Here is a 272-residue protein sequence, read N- to C-terminus: Acetylglutamate kinase (272 aa).

Substrate-binding positions include 41–42 (GG), R63, and N166.

This sequence belongs to the acetylglutamate kinase family. ArgB subfamily.

It localises to the cytoplasm. It catalyses the reaction N-acetyl-L-glutamate + ATP = N-acetyl-L-glutamyl 5-phosphate + ADP. Its pathway is amino-acid biosynthesis; L-arginine biosynthesis; N(2)-acetyl-L-ornithine from L-glutamate: step 2/4. Functionally, catalyzes the ATP-dependent phosphorylation of N-acetyl-L-glutamate. This Anaeromyxobacter sp. (strain K) protein is Acetylglutamate kinase.